Reading from the N-terminus, the 169-residue chain is Lipoprotein signal peptidase (169 aa).

A run of 4 helical transmembrane segments spans residues 10 to 30 (LPWL…KAFF), 40 to 60 (IVVI…AAFS), 68 to 88 (WQRW…VVWL), and 94 to 114 (GETW…GNLY). Active-site residues include Asp-124 and Asp-143. The helical transmembrane segment at 135–155 (YFPAFNLADSAITVGAVMLAL) threads the bilayer.

Belongs to the peptidase A8 family.

It is found in the cell inner membrane. The catalysed reaction is Release of signal peptides from bacterial membrane prolipoproteins. Hydrolyzes -Xaa-Yaa-Zaa-|-(S,diacylglyceryl)Cys-, in which Xaa is hydrophobic (preferably Leu), and Yaa (Ala or Ser) and Zaa (Gly or Ala) have small, neutral side chains.. It participates in protein modification; lipoprotein biosynthesis (signal peptide cleavage). This protein specifically catalyzes the removal of signal peptides from prolipoproteins. The protein is Lipoprotein signal peptidase of Pseudomonas aeruginosa (strain UCBPP-PA14).